The sequence spans 927 residues: Isoleucine--tRNA ligase (927 aa).

The short motif at 57-67 (PFANGNIHMGH) is the 'HIGH' region element. An L-isoleucyl-5'-AMP-binding site is contributed by Glu553. A 'KMSKS' region motif is present at residues 594–598 (KMSKS). Lys597 is a binding site for ATP. Residues Cys886, Cys889, Cys906, and Cys909 each coordinate Zn(2+).

Belongs to the class-I aminoacyl-tRNA synthetase family. IleS type 1 subfamily. As to quaternary structure, monomer. Zn(2+) serves as cofactor.

Its subcellular location is the cytoplasm. It catalyses the reaction tRNA(Ile) + L-isoleucine + ATP = L-isoleucyl-tRNA(Ile) + AMP + diphosphate. Its function is as follows. Catalyzes the attachment of isoleucine to tRNA(Ile). As IleRS can inadvertently accommodate and process structurally similar amino acids such as valine, to avoid such errors it has two additional distinct tRNA(Ile)-dependent editing activities. One activity is designated as 'pretransfer' editing and involves the hydrolysis of activated Val-AMP. The other activity is designated 'posttransfer' editing and involves deacylation of mischarged Val-tRNA(Ile). The polypeptide is Isoleucine--tRNA ligase (Lactobacillus helveticus (strain DPC 4571)).